The primary structure comprises 102 residues: Small ribosomal subunit protein bS18 (102 aa).

Belongs to the bacterial ribosomal protein bS18 family. Part of the 30S ribosomal subunit. Forms a tight heterodimer with protein bS6.

In terms of biological role, binds as a heterodimer with protein bS6 to the central domain of the 16S rRNA, where it helps stabilize the platform of the 30S subunit. The chain is Small ribosomal subunit protein bS18 from Orientia tsutsugamushi (strain Ikeda) (Rickettsia tsutsugamushi).